The following is a 97-amino-acid chain: MKIKHMPAKKSRLSKAQRDFLDTYFEVNPHPNTQERAYIASQSLVSEEKIRNWFQNRRTRERGDCKIASHRSAFSVNTFEENTSSVHPTSNDLYIRR.

A DNA-binding region (homeobox) is located at residues methionine 6 to cysteine 65.

Its subcellular location is the nucleus. The protein is Homeobox protein HD-9 (HD-9) of Encephalitozoon cuniculi (strain GB-M1) (Microsporidian parasite).